The chain runs to 501 residues: Geissoschizine oxidase (501 aa).

Residues 1–21 (MEFSFSSPLLYILYFLLFFIV) traverse the membrane as a helical segment. Cysteine 442 contacts heme.

This sequence belongs to the cytochrome P450 family. The cofactor is heme.

The protein resides in the membrane. The enzyme catalyses (19E)-geissoschizine + reduced [NADPH--hemoprotein reductase] + O2 = akuammicine + formate + oxidized [NADPH--hemoprotein reductase] + H2O + H(+). The protein operates within alkaloid biosynthesis. Functionally, a cytochrome P450 monooxygenase involved in the biosynthesis of strychnos monoterpene indole alkaloids (MIAs) natural products, compounds with effects on glucose absorption. Catalyzes the conversion of geissoschizine to akuammicine. This chain is Geissoschizine oxidase, found in Alstonia scholaris (Dogbane).